Consider the following 251-residue polypeptide: MAIRVIPCLDVKDGRVVKGVNFVGLRDAGDPVELAAEYGRLGADEVTFLDISASTEGRATTREMVTRCAETVFVPLTVGGGVRGVDDVDVLLRAGADKVGVNTAAIAHPGMIDEVADRFGNQVIVLSVDARREPDRPSGFGVTTHGGTRSAGLDAVEWACQAVERGAGEILLNSMDADGTADGFDIEMIEAVRAAVDVPLIASGGAGKVADFVEAARAGVDAVLAASVFHYHTLTIAQIKDGLRHAGFEVR.

Catalysis depends on residues Asp10 and Asp129.

Belongs to the HisA/HisF family. Heterodimer of HisH and HisF.

Its subcellular location is the cytoplasm. It catalyses the reaction 5-[(5-phospho-1-deoxy-D-ribulos-1-ylimino)methylamino]-1-(5-phospho-beta-D-ribosyl)imidazole-4-carboxamide + L-glutamine = D-erythro-1-(imidazol-4-yl)glycerol 3-phosphate + 5-amino-1-(5-phospho-beta-D-ribosyl)imidazole-4-carboxamide + L-glutamate + H(+). It participates in amino-acid biosynthesis; L-histidine biosynthesis; L-histidine from 5-phospho-alpha-D-ribose 1-diphosphate: step 5/9. In terms of biological role, IGPS catalyzes the conversion of PRFAR and glutamine to IGP, AICAR and glutamate. The HisF subunit catalyzes the cyclization activity that produces IGP and AICAR from PRFAR using the ammonia provided by the HisH subunit. The polypeptide is Imidazole glycerol phosphate synthase subunit HisF (Cutibacterium acnes (strain DSM 16379 / KPA171202) (Propionibacterium acnes)).